The sequence spans 155 residues: Putative pre-16S rRNA nuclease (155 aa).

It belongs to the YqgF nuclease family.

It is found in the cytoplasm. In terms of biological role, could be a nuclease involved in processing of the 5'-end of pre-16S rRNA. The protein is Putative pre-16S rRNA nuclease of Novosphingobium aromaticivorans (strain ATCC 700278 / DSM 12444 / CCUG 56034 / CIP 105152 / NBRC 16084 / F199).